A 428-amino-acid chain; its full sequence is Serine--tRNA ligase (428 aa).

Residue 235–237 (TAE) participates in L-serine binding. An ATP-binding site is contributed by 266–268 (RSE). Glu289 is an L-serine binding site. 353-356 (EISS) is an ATP binding site. Ser389 lines the L-serine pocket.

Belongs to the class-II aminoacyl-tRNA synthetase family. Type-1 seryl-tRNA synthetase subfamily. As to quaternary structure, homodimer. The tRNA molecule binds across the dimer.

The protein resides in the cytoplasm. It catalyses the reaction tRNA(Ser) + L-serine + ATP = L-seryl-tRNA(Ser) + AMP + diphosphate + H(+). The catalysed reaction is tRNA(Sec) + L-serine + ATP = L-seryl-tRNA(Sec) + AMP + diphosphate + H(+). It participates in aminoacyl-tRNA biosynthesis; selenocysteinyl-tRNA(Sec) biosynthesis; L-seryl-tRNA(Sec) from L-serine and tRNA(Sec): step 1/1. In terms of biological role, catalyzes the attachment of serine to tRNA(Ser). Is also able to aminoacylate tRNA(Sec) with serine, to form the misacylated tRNA L-seryl-tRNA(Sec), which will be further converted into selenocysteinyl-tRNA(Sec). This is Serine--tRNA ligase from Shewanella baltica (strain OS223).